Reading from the N-terminus, the 150-residue chain is Macrodomain Ter protein (150 aa).

The protein belongs to the MatP family. Homodimer.

The protein resides in the cytoplasm. Its function is as follows. Required for spatial organization of the terminus region of the chromosome (Ter macrodomain) during the cell cycle. Prevents early segregation of duplicated Ter macrodomains during cell division. Binds specifically to matS, which is a 13 bp signature motif repeated within the Ter macrodomain. The polypeptide is Macrodomain Ter protein (Salmonella arizonae (strain ATCC BAA-731 / CDC346-86 / RSK2980)).